Here is a 178-residue protein sequence, read N- to C-terminus: Interleukin-10 (178 aa).

The N-terminal stretch at 1–18 (MPSSALLYCLILLAGVRP) is a signal peptide. 2 disulfides stabilise this stretch: Cys30/Cys126 and Cys80/Cys132. N-linked (GlcNAc...) asparagine glycosylation occurs at Asn134.

Belongs to the IL-10 family. As to quaternary structure, homodimer. Interacts with IL10RA and IL10RB.

The protein localises to the secreted. Its function is as follows. Major immune regulatory cytokine that acts on many cells of the immune system where it has profound anti-inflammatory functions, limiting excessive tissue disruption caused by inflammation. Mechanistically, IL10 binds to its heterotetrameric receptor comprising IL10RA and IL10RB leading to JAK1 and STAT2-mediated phosphorylation of STAT3. In turn, STAT3 translocates to the nucleus where it drives expression of anti-inflammatory mediators. Targets antigen-presenting cells (APCs) such as macrophages and monocytes and inhibits their release of pro-inflammatory cytokines including granulocyte-macrophage colony-stimulating factor /GM-CSF, granulocyte colony-stimulating factor/G-CSF, IL-1 alpha, IL-1 beta, IL-6, IL-8 and TNF-alpha. Also interferes with antigen presentation by reducing the expression of MHC-class II and co-stimulatory molecules, thereby inhibiting their ability to induce T cell activation. In addition, controls the inflammatory response of macrophages by reprogramming essential metabolic pathways including mTOR signaling. This chain is Interleukin-10 (IL10), found in Meriones unguiculatus (Mongolian jird).